An 87-amino-acid chain; its full sequence is DNA-directed RNA polymerase subunit omega (87 aa).

The protein belongs to the RNA polymerase subunit omega family. In terms of assembly, the RNAP catalytic core consists of 2 alpha, 1 beta, 1 beta' and 1 omega subunit. When a sigma factor is associated with the core the holoenzyme is formed, which can initiate transcription.

It catalyses the reaction RNA(n) + a ribonucleoside 5'-triphosphate = RNA(n+1) + diphosphate. Promotes RNA polymerase assembly. Latches the N- and C-terminal regions of the beta' subunit thereby facilitating its interaction with the beta and alpha subunits. This is DNA-directed RNA polymerase subunit omega from Acidothermus cellulolyticus (strain ATCC 43068 / DSM 8971 / 11B).